A 299-amino-acid polypeptide reads, in one-letter code: Protein tantalus (299 aa).

The interval 16–100 is disordered; it reads KDNRSPTTNS…RSSTFGARAG (85 aa). Residues 20 to 35 are compositionally biased toward polar residues; the sequence is SPTTNSNLSWQLNQMA. Residues 53-69 show a composition bias toward acidic residues; it reads ESDDNVSSESHDSDDVD. Low complexity predominate over residues 84–93; the sequence is CISGSSRRSS. A phosphoserine mark is found at Ser-204 and Ser-264.

In terms of assembly, binds to DNA in vitro. Interacts directly with Asx. Ubiquitously expressed in precellularized embryos. Then it decreases at cellular blastoderm to increase again during germ band extension. During germ band extension, it is highly expressed in somatic and visceral mesoderm. Ubiquitously expressed in imaginal disks. In ovary, it is expressed from stage 10.

The protein localises to the nucleus. It is found in the cytoplasm. The protein resides in the chromosome. Functionally, potential cofactor involved in sensory organ development. Despite its interaction with the Polycomb group protein Asx, it does not regulate the expression of homeotic genes. This Drosophila melanogaster (Fruit fly) protein is Protein tantalus.